The chain runs to 387 residues: 3-ketoacyl-CoA thiolase (387 aa).

Residue C91 is the Acyl-thioester intermediate of the active site. Catalysis depends on proton acceptor residues H343 and C373.

This sequence belongs to the thiolase-like superfamily. Thiolase family. Heterotetramer of two alpha chains (FadB) and two beta chains (FadA).

It localises to the cytoplasm. It catalyses the reaction an acyl-CoA + acetyl-CoA = a 3-oxoacyl-CoA + CoA. It participates in lipid metabolism; fatty acid beta-oxidation. Its function is as follows. Catalyzes the final step of fatty acid oxidation in which acetyl-CoA is released and the CoA ester of a fatty acid two carbons shorter is formed. This chain is 3-ketoacyl-CoA thiolase, found in Shigella sonnei (strain Ss046).